The chain runs to 579 residues: ATP-dependent lipid A-core flippase (579 aa).

Transmembrane regions (helical) follow at residues 24 to 44 (FLAA…LAEM), 61 to 81 (LMLP…TFLG), 147 to 167 (LFVI…TLIF), and 253 to 273 (LLVA…ALMA). The ABC transmembrane type-1 domain occupies 25-306 (LAAVVGYAIY…LTEVNSTIQK (282 aa)). In terms of domain architecture, ABC transporter spans 338-573 (VRFEGVRFRY…DGAYAALHQL (236 aa)). 372 to 379 (GRSGSGKS) is a binding site for ATP.

This sequence belongs to the ABC transporter superfamily. Lipid exporter (TC 3.A.1.106) family. In terms of assembly, homodimer.

The protein localises to the cell inner membrane. The enzyme catalyses ATP + H2O + lipid A-core oligosaccharideSide 1 = ADP + phosphate + lipid A-core oligosaccharideSide 2.. Functionally, involved in lipopolysaccharide (LPS) biosynthesis. Translocates lipid A-core from the inner to the outer leaflet of the inner membrane. Transmembrane domains (TMD) form a pore in the inner membrane and the ATP-binding domain (NBD) is responsible for energy generation. The protein is ATP-dependent lipid A-core flippase of Chromohalobacter salexigens (strain ATCC BAA-138 / DSM 3043 / CIP 106854 / NCIMB 13768 / 1H11).